The chain runs to 111 residues: Large ribosomal subunit protein uL22 (111 aa).

It belongs to the universal ribosomal protein uL22 family. As to quaternary structure, part of the 50S ribosomal subunit.

Its function is as follows. This protein binds specifically to 23S rRNA; its binding is stimulated by other ribosomal proteins, e.g. L4, L17, and L20. It is important during the early stages of 50S assembly. It makes multiple contacts with different domains of the 23S rRNA in the assembled 50S subunit and ribosome. In terms of biological role, the globular domain of the protein is located near the polypeptide exit tunnel on the outside of the subunit, while an extended beta-hairpin is found that lines the wall of the exit tunnel in the center of the 70S ribosome. This is Large ribosomal subunit protein uL22 from Clostridium tetani (strain Massachusetts / E88).